We begin with the raw amino-acid sequence, 235 residues long: Small ribosomal subunit protein uS2c (235 aa).

The protein belongs to the universal ribosomal protein uS2 family.

It localises to the plastid. The protein localises to the chloroplast. This is Small ribosomal subunit protein uS2c (rps2) from Cryptomeria japonica (Japanese cedar).